The chain runs to 221 residues: Veficolin-1 (221 aa).

Positions 1-25 are cleaved as a signal peptide; it reads MTAWLDFPLALSPLVVVSMKGGSFG. The 55-residue stretch at 50–104 folds into the Collagen-like domain; that stretch reads QGQAGIPGIPGVPGTNGLPGAKGDLGPQGPPGERGSTGIPGKAGPKGDKGDQGEA. The disordered stretch occupies residues 54–104; sequence GIPGIPGVPGTNGLPGAKGDLGPQGPPGERGSTGIPGKAGPKGDKGDQGEA. In terms of domain architecture, Fibrinogen C-terminal spans 111–221; sequence QQQEAGAKDC…DFNNSKTFAK (111 aa). Cys-120 and Cys-148 are joined by a disulfide.

Belongs to the ficolin lectin family. Veficolin subfamily. In terms of tissue distribution, expressed by the mandibular venom duct.

The protein resides in the secreted. In terms of biological role, initiates complement activation and/or interferes in platelet aggregation and/or blood coagulation. The chain is Veficolin-1 from Varanus komodoensis (Komodo dragon).